A 60-amino-acid chain; its full sequence is Large ribosomal subunit protein bL32 (60 aa).

Residues 1-19 (MGVPKRKTSKGRRDKRRAH) are compositionally biased toward basic residues. A disordered region spans residues 1–20 (MGVPKRKTSKGRRDKRRAHL).

It belongs to the bacterial ribosomal protein bL32 family.

This is Large ribosomal subunit protein bL32 from Syntrophobacter fumaroxidans (strain DSM 10017 / MPOB).